We begin with the raw amino-acid sequence, 478 residues long: ATP synthase subunit beta (478 aa).

An ATP-binding site is contributed by 163–170; that stretch reads GGAGVGKT.

It belongs to the ATPase alpha/beta chains family. As to quaternary structure, F-type ATPases have 2 components, CF(1) - the catalytic core - and CF(0) - the membrane proton channel. CF(1) has five subunits: alpha(3), beta(3), gamma(1), delta(1), epsilon(1). CF(0) has three main subunits: a(1), b(2) and c(9-12). The alpha and beta chains form an alternating ring which encloses part of the gamma chain. CF(1) is attached to CF(0) by a central stalk formed by the gamma and epsilon chains, while a peripheral stalk is formed by the delta and b chains.

It is found in the cell inner membrane. The catalysed reaction is ATP + H2O + 4 H(+)(in) = ADP + phosphate + 5 H(+)(out). In terms of biological role, produces ATP from ADP in the presence of a proton gradient across the membrane. The catalytic sites are hosted primarily by the beta subunits. The sequence is that of ATP synthase subunit beta from Aquifex pyrophilus.